Consider the following 150-residue polypeptide: MKALYMVFVLWVLIGCFLSGECHRAPRGQHGPRRTLAPSTHHRHYHLYPLPDPNHVQFGVPPFLPTSSGFCKPHSLSLYAPPFEIVIQPSSIIVTIPGLILTLSSDPSPQRNCPARTPPRVKANIIPGPITAQLLPKLKIPLIILDDSRK.

The first 22 residues, 1–22, serve as a signal peptide directing secretion; that stretch reads MKALYMVFVLWVLIGCFLSGEC.

It is found in the secreted. May play a role in protection or detoxification. The polypeptide is Submaxillary gland androgen-regulated protein 2, isoform alpha (Smr2) (Mus musculus (Mouse)).